Here is a 311-residue protein sequence, read N- to C-terminus: Ribosomal RNA small subunit methyltransferase H (311 aa).

Residues 35–37 (GGH), D55, F80, D102, and Q109 contribute to the S-adenosyl-L-methionine site.

It belongs to the methyltransferase superfamily. RsmH family.

The protein resides in the cytoplasm. It catalyses the reaction cytidine(1402) in 16S rRNA + S-adenosyl-L-methionine = N(4)-methylcytidine(1402) in 16S rRNA + S-adenosyl-L-homocysteine + H(+). Functionally, specifically methylates the N4 position of cytidine in position 1402 (C1402) of 16S rRNA. The polypeptide is Ribosomal RNA small subunit methyltransferase H (Pseudoalteromonas atlantica (strain T6c / ATCC BAA-1087)).